Here is a 243-residue protein sequence, read N- to C-terminus: Carboxy-S-adenosyl-L-methionine synthase (243 aa).

Residues Tyr-40, 65–67 (GCS), 90–91 (DN), 118–119 (DI), Asn-133, and Arg-200 each bind S-adenosyl-L-methionine.

This sequence belongs to the class I-like SAM-binding methyltransferase superfamily. Cx-SAM synthase family. Homodimer.

The enzyme catalyses prephenate + S-adenosyl-L-methionine = carboxy-S-adenosyl-L-methionine + 3-phenylpyruvate + H2O. Catalyzes the conversion of S-adenosyl-L-methionine (SAM) to carboxy-S-adenosyl-L-methionine (Cx-SAM). The protein is Carboxy-S-adenosyl-L-methionine synthase of Shewanella pealeana (strain ATCC 700345 / ANG-SQ1).